Here is a 360-residue protein sequence, read N- to C-terminus: Peptide chain release factor 1 (360 aa).

An N5-methylglutamine modification is found at glutamine 237.

Belongs to the prokaryotic/mitochondrial release factor family. Post-translationally, methylated by PrmC. Methylation increases the termination efficiency of RF1.

It localises to the cytoplasm. In terms of biological role, peptide chain release factor 1 directs the termination of translation in response to the peptide chain termination codons UAG and UAA. The protein is Peptide chain release factor 1 of Nitrosococcus oceani (strain ATCC 19707 / BCRC 17464 / JCM 30415 / NCIMB 11848 / C-107).